The sequence spans 201 residues: Probable quinol oxidase subunit 3 (201 aa).

A run of 5 helical transmembrane segments spans residues 20–40 (LGFW…FATL), 62–82 (LILI…IAIY), 91–111 (LMMF…GFEI), 133–153 (FFIL…WVIC), and 172–192 (FIVS…FTAV).

It belongs to the cytochrome c oxidase subunit 3 family.

The protein localises to the cell membrane. The enzyme catalyses 2 a quinol + O2 = 2 a quinone + 2 H2O. Functionally, catalyzes quinol oxidation with the concomitant reduction of oxygen to water. The chain is Probable quinol oxidase subunit 3 (qoxC) from Staphylococcus epidermidis (strain ATCC 35984 / DSM 28319 / BCRC 17069 / CCUG 31568 / BM 3577 / RP62A).